The primary structure comprises 297 residues: tRNA pseudouridine synthase B (297 aa).

The active-site Nucleophile is aspartate 39.

It belongs to the pseudouridine synthase TruB family. Type 1 subfamily.

The enzyme catalyses uridine(55) in tRNA = pseudouridine(55) in tRNA. In terms of biological role, responsible for synthesis of pseudouridine from uracil-55 in the psi GC loop of transfer RNAs. The chain is tRNA pseudouridine synthase B from Lactobacillus johnsonii (strain CNCM I-12250 / La1 / NCC 533).